Here is a 54-residue protein sequence, read N- to C-terminus: UPF0391 membrane protein pRL90066 (54 aa).

2 consecutive transmembrane segments (helical) span residues 5 to 25 (ALVFLVVALIAGVLGFGGIAG) and 28 to 48 (ASIAQVLFFIFLVLFVVSLVM).

This sequence belongs to the UPF0391 family.

The protein resides in the cell membrane. This Rhizobium johnstonii (strain DSM 114642 / LMG 32736 / 3841) (Rhizobium leguminosarum bv. viciae) protein is UPF0391 membrane protein pRL90066.